A 102-amino-acid polypeptide reads, in one-letter code: Large ribosomal subunit protein bL21 (102 aa).

The protein belongs to the bacterial ribosomal protein bL21 family. In terms of assembly, part of the 50S ribosomal subunit. Contacts protein L20.

In terms of biological role, this protein binds to 23S rRNA in the presence of protein L20. The chain is Large ribosomal subunit protein bL21 from Geobacter metallireducens (strain ATCC 53774 / DSM 7210 / GS-15).